A 403-amino-acid chain; its full sequence is S-adenosylmethionine synthase (403 aa).

ATP is bound at residue H15. Residue D17 coordinates Mg(2+). Residue E43 coordinates K(+). L-methionine-binding residues include E56 and Q99. The interval 99–109 (QSPDINQGVDR) is flexible loop. ATP is bound by residues 166–168 (DAK), 232–233 (KF), D241, 247–248 (RK), A264, and K268. L-methionine is bound at residue D241. K272 contributes to the L-methionine binding site.

It belongs to the AdoMet synthase family. Homotetramer; dimer of dimers. Requires Mg(2+) as cofactor. It depends on K(+) as a cofactor.

Its subcellular location is the cytoplasm. It catalyses the reaction L-methionine + ATP + H2O = S-adenosyl-L-methionine + phosphate + diphosphate. Its pathway is amino-acid biosynthesis; S-adenosyl-L-methionine biosynthesis; S-adenosyl-L-methionine from L-methionine: step 1/1. In terms of biological role, catalyzes the formation of S-adenosylmethionine (AdoMet) from methionine and ATP. The overall synthetic reaction is composed of two sequential steps, AdoMet formation and the subsequent tripolyphosphate hydrolysis which occurs prior to release of AdoMet from the enzyme. The polypeptide is S-adenosylmethionine synthase (Xanthomonas campestris pv. campestris (strain 8004)).